The chain runs to 213 residues: 3-isopropylmalate dehydratase small subunit (213 aa).

This sequence belongs to the LeuD family. LeuD type 1 subfamily. In terms of assembly, heterodimer of LeuC and LeuD.

It catalyses the reaction (2R,3S)-3-isopropylmalate = (2S)-2-isopropylmalate. It participates in amino-acid biosynthesis; L-leucine biosynthesis; L-leucine from 3-methyl-2-oxobutanoate: step 2/4. Its function is as follows. Catalyzes the isomerization between 2-isopropylmalate and 3-isopropylmalate, via the formation of 2-isopropylmaleate. This is 3-isopropylmalate dehydratase small subunit from Neisseria meningitidis serogroup A / serotype 4A (strain DSM 15465 / Z2491).